A 323-amino-acid chain; its full sequence is Dof zinc finger protein DOF3.6 (323 aa).

A Dof-type zinc finger spans residues 76-130 (LNCPRCDSTNTKFCYFNNYSLTQPRHFCKTCRRYWTRGGSLRNVPVGGGFRRNKR). Residues cysteine 78, cysteine 81, cysteine 103, and cysteine 106 each coordinate Zn(2+). Disordered stretches follow at residues 121–160 (VGGG…SYSN) and 304–323 (GGNS…HLSF). Basic residues predominate over residues 126–135 (RRNKRSKSRS). Residues 136 to 159 (KSTVVVSTDNTTSTSSLTSRPSYS) show a composition bias toward low complexity.

Interacts with OBF4. In terms of tissue distribution, predominantly expressed in roots.

Its subcellular location is the nucleus. In terms of biological role, transcription factor that binds specifically to a 5'-AA[AG]G-3' consensus core sequence. Enhances the DNA binding of OBF transcription factors to OCS elements. This is Dof zinc finger protein DOF3.6 (DOF3.6) from Arabidopsis thaliana (Mouse-ear cress).